Consider the following 769-residue polypeptide: DNA gyrase subunit B (769 aa).

Residues 414 to 528 (SEIYLVEGDS…NGHIYLAQPP (115 aa)) form the Toprim domain. Mg(2+) contacts are provided by E420, D493, and D495.

This sequence belongs to the type II topoisomerase GyrB family. As to quaternary structure, heterotetramer, composed of two GyrA and two GyrB chains. In the heterotetramer, GyrA contains the active site tyrosine that forms a transient covalent intermediate with DNA, while GyrB binds cofactors and catalyzes ATP hydrolysis. Requires Mg(2+) as cofactor. Mn(2+) is required as a cofactor. Ca(2+) serves as cofactor.

Its subcellular location is the cytoplasm. It carries out the reaction ATP-dependent breakage, passage and rejoining of double-stranded DNA.. Functionally, a type II topoisomerase that negatively supercoils closed circular double-stranded (ds) DNA in an ATP-dependent manner to modulate DNA topology and maintain chromosomes in an underwound state. Negative supercoiling favors strand separation, and DNA replication, transcription, recombination and repair, all of which involve strand separation. Also able to catalyze the interconversion of other topological isomers of dsDNA rings, including catenanes and knotted rings. Type II topoisomerases break and join 2 DNA strands simultaneously in an ATP-dependent manner. This is DNA gyrase subunit B from Campylobacter jejuni subsp. jejuni serotype O:2 (strain ATCC 700819 / NCTC 11168).